Reading from the N-terminus, the 600-residue chain is UvrABC system protein C (600 aa).

A GIY-YIG domain is found at 16–94 (EKPGCYQYFD…IKEYQPRYNV (79 aa)). One can recognise a UVR domain in the interval 208-243 (HRLVRMYRDRMQAYSEELRFEEAQICKERIELLERY).

Belongs to the UvrC family. As to quaternary structure, interacts with UvrB in an incision complex.

The protein resides in the cytoplasm. In terms of biological role, the UvrABC repair system catalyzes the recognition and processing of DNA lesions. UvrC both incises the 5' and 3' sides of the lesion. The N-terminal half is responsible for the 3' incision and the C-terminal half is responsible for the 5' incision. The polypeptide is UvrABC system protein C (Porphyromonas gingivalis (strain ATCC 33277 / DSM 20709 / CIP 103683 / JCM 12257 / NCTC 11834 / 2561)).